A 100-amino-acid chain; its full sequence is MQVLVRDNNVDQALKALKKKMQREGIFREMKLRGHYEKPSEKKAREKAEAVRRARKLARKKLQREGLLPMKPKPVFGAGPGGDRGRGPAAGAGAGPRGPR.

A disordered region spans residues 61–100 (KLQREGLLPMKPKPVFGAGPGGDRGRGPAAGAGAGPRGPR). Residues 78–100 (AGPGGDRGRGPAAGAGAGPRGPR) show a composition bias toward gly residues.

Belongs to the bacterial ribosomal protein bS21 family.

The polypeptide is Small ribosomal subunit protein bS21 (Rhodopseudomonas palustris (strain BisB18)).